A 350-amino-acid chain; its full sequence is Biotin synthase (350 aa).

One can recognise a Radical SAM core domain in the interval 38–256 (NHVQVSTLLS…IAVARIMMPE (219 aa)). [4Fe-4S] cluster-binding residues include C53, C57, and C60. [2Fe-2S] cluster is bound by residues C97, C128, C188, and R260.

This sequence belongs to the radical SAM superfamily. Biotin synthase family. In terms of assembly, homodimer. Requires [4Fe-4S] cluster as cofactor. [2Fe-2S] cluster is required as a cofactor.

It carries out the reaction (4R,5S)-dethiobiotin + (sulfur carrier)-SH + 2 reduced [2Fe-2S]-[ferredoxin] + 2 S-adenosyl-L-methionine = (sulfur carrier)-H + biotin + 2 5'-deoxyadenosine + 2 L-methionine + 2 oxidized [2Fe-2S]-[ferredoxin]. It participates in cofactor biosynthesis; biotin biosynthesis; biotin from 7,8-diaminononanoate: step 2/2. Catalyzes the conversion of dethiobiotin (DTB) to biotin by the insertion of a sulfur atom into dethiobiotin via a radical-based mechanism. This is Biotin synthase from Aliivibrio fischeri (strain MJ11) (Vibrio fischeri).